Consider the following 394-residue polypeptide: Elongation factor Tu 1 (394 aa).

The region spanning 10-204 (KPHVNVGTIG…ALDSYIPEPQ (195 aa)) is the tr-type G domain. Residues 19–26 (GHVDHGKT) form a G1 region. Residue 19–26 (GHVDHGKT) coordinates GTP. Mg(2+) is bound at residue Thr26. Residues 60 to 64 (GITIN) form a G2 region. The tract at residues 81-84 (DCPG) is G3. Residues 81 to 85 (DCPGH) and 136 to 139 (NKCD) contribute to the GTP site. The G4 stretch occupies residues 136-139 (NKCD). Residues 174 to 176 (SAL) are G5.

It belongs to the TRAFAC class translation factor GTPase superfamily. Classic translation factor GTPase family. EF-Tu/EF-1A subfamily. As to quaternary structure, monomer.

Its subcellular location is the cytoplasm. It catalyses the reaction GTP + H2O = GDP + phosphate + H(+). In terms of biological role, GTP hydrolase that promotes the GTP-dependent binding of aminoacyl-tRNA to the A-site of ribosomes during protein biosynthesis. The sequence is that of Elongation factor Tu 1 from Shewanella baltica (strain OS195).